Reading from the N-terminus, the 64-residue chain is Lantibiotic actagardine (64 aa).

Residues 1–45 (MSALAIEKSWKDVDLRDGATSHPAGLGFGELTFEDLREDRTIYAA) constitute a propeptide that is removed on maturation. The segment at residues 46 to 51 (SSGWVC) is a cross-link (lanthionine (Ser-Cys)). 2 consecutive cross-links (beta-methyllanthionine (Thr-Cys)) follow at residues 52 to 57 (TLTIEC) and 54 to 62 (TIECGTVIC). The segment at residues 59–64 (TVICAC) is a cross-link (beta-methyllanthionine sulfoxide (Thr-Cys)).

It belongs to the type B lantibiotic family. Maturation of lantibiotics involves the enzymatic conversion of Thr, and Ser into dehydrated AA by the enzyme garM and the formation of thioether bonds with cysteine. The 59-64 beta-methyllanthionine thioether bond is oxidized to a sulfoxide by the monooxygenase GarO. This is followed by membrane translocation and cleavage of the modified precursor. In terms of processing, the sulfoxide group of the 59-64 beta-methyllanthionine thioether bond is mildly important for activity, since the antibacterial activity of deoxyactagardine is marginally lower compared with oxidized actagardine.

In terms of biological role, has potent antibacterial activity against some Gram-positive bacteria. Has good antistreptococcal activity. Inhibits cell wall biosynthesis by binding to lipid II and blocking transglycosylation. The sequence is that of Lantibiotic actagardine from Actinoplanes garbadinensis.